Reading from the N-terminus, the 223-residue chain is Deoxyribose-phosphate aldolase (223 aa).

The active-site Proton donor/acceptor is the aspartate 89. The Schiff-base intermediate with acetaldehyde role is filled by lysine 152. The active-site Proton donor/acceptor is the lysine 181.

The protein belongs to the DeoC/FbaB aldolase family. DeoC type 1 subfamily.

It localises to the cytoplasm. It catalyses the reaction 2-deoxy-D-ribose 5-phosphate = D-glyceraldehyde 3-phosphate + acetaldehyde. It functions in the pathway carbohydrate degradation; 2-deoxy-D-ribose 1-phosphate degradation; D-glyceraldehyde 3-phosphate and acetaldehyde from 2-deoxy-alpha-D-ribose 1-phosphate: step 2/2. Its function is as follows. Catalyzes a reversible aldol reaction between acetaldehyde and D-glyceraldehyde 3-phosphate to generate 2-deoxy-D-ribose 5-phosphate. This is Deoxyribose-phosphate aldolase from Listeria welshimeri serovar 6b (strain ATCC 35897 / DSM 20650 / CCUG 15529 / CIP 8149 / NCTC 11857 / SLCC 5334 / V8).